The chain runs to 320 residues: Ribose-phosphate pyrophosphokinase (320 aa).

ATP-binding positions include 43-45 (DGE) and 102-103 (RQ). Mg(2+) is bound by residues His136 and Asp178. Lys201 is a catalytic residue. D-ribose 5-phosphate is bound by residues Arg203, Asp227, and 231-235 (DTAGT).

Belongs to the ribose-phosphate pyrophosphokinase family. Class I subfamily. As to quaternary structure, homohexamer. Mg(2+) is required as a cofactor.

The protein localises to the cytoplasm. The catalysed reaction is D-ribose 5-phosphate + ATP = 5-phospho-alpha-D-ribose 1-diphosphate + AMP + H(+). The protein operates within metabolic intermediate biosynthesis; 5-phospho-alpha-D-ribose 1-diphosphate biosynthesis; 5-phospho-alpha-D-ribose 1-diphosphate from D-ribose 5-phosphate (route I): step 1/1. Its function is as follows. Involved in the biosynthesis of the central metabolite phospho-alpha-D-ribosyl-1-pyrophosphate (PRPP) via the transfer of pyrophosphoryl group from ATP to 1-hydroxyl of ribose-5-phosphate (Rib-5-P). This is Ribose-phosphate pyrophosphokinase from Clostridium tetani (strain Massachusetts / E88).